We begin with the raw amino-acid sequence, 1608 residues long: Protein REDUCED CHLOROPLAST COVERAGE 3 (1608 aa).

Over residues 1-12 (MAPRSSKGKSNN) the composition is skewed to basic residues. 2 disordered regions span residues 1 to 22 (MAPR…KKKR) and 278 to 303 (VSES…GRNG). The Clu domain occupies 288 to 564 (EDEHWGGNGG…KKETDVCGKP (277 aa)). TPR repeat units lie at residues 848–881 (GRTL…MIAV), 890–923 (ACAY…NERE), 932–965 (MKSY…LHFT), and 974–1007 (AATY…NKRL). Disordered regions lie at residues 1194–1226 (VEES…RQPD), 1238–1292 (HNRN…ASGA), 1369–1400 (KQES…KTSD), 1466–1499 (TPRS…VSVD), and 1531–1552 (PAAL…KDSA). Positions 1217–1224 (GRKSRQRQ) match the Nuclear localization signal motif. Polar residues-rich tracts occupy residues 1242–1265 (QDVQ…LSKS) and 1373–1385 (QESA…LTSE). Polar residues predominate over residues 1535-1546 (SKTSPEAESGGT).

The protein resides in the nucleus. It is found in the cytoplasm. Its subcellular location is the cytosol. In terms of biological role, may act as the scaffold of a protein complex, which sequesters key factors that are required for the G2 to M transition in meristematic tissues. Together with REC2, REC3 and FMT/CLU, contributes to the establishment of the cellular volume devoted to the chloroplast compartment. The polypeptide is Protein REDUCED CHLOROPLAST COVERAGE 3 (Arabidopsis thaliana (Mouse-ear cress)).